The chain runs to 239 residues: Octanoyl-[acyl-carrier-protein]:protein N-octanoyltransferase LIPT2, mitochondrial (239 aa).

A mitochondrion-targeting transit peptide spans 1–18 (MSVPVLRVRRLGLVGYAE). Positions 37-217 (GSPGGALLLC…AFEEEFQCQL (181 aa)) constitute a BPL/LPL catalytic domain. Substrate-binding positions include 81 to 88 (RGGLITFH), 147 to 149 (AIG), and 160 to 162 (GLA). The active-site Acyl-thioester intermediate is Cys178. The disordered stretch occupies residues 220–239 (EQNPEQNPVQNRPDRDAGPL).

Belongs to the LipB family.

The protein localises to the mitochondrion. The enzyme catalyses octanoyl-[ACP] + L-lysyl-[protein] = N(6)-octanoyl-L-lysyl-[protein] + holo-[ACP] + H(+). It functions in the pathway protein modification; protein lipoylation via endogenous pathway; protein N(6)-(lipoyl)lysine from octanoyl-[acyl-carrier-protein]: step 1/2. Its function is as follows. Catalyzes the transfer of endogenously produced octanoic acid from octanoyl-acyl-carrier-protein (octanoyl-ACP) onto the lipoyl domains of lipoate-dependent enzymes such as the protein H of the glycine cleavage system (GCSH). Lipoyl-ACP can also act as a substrate although octanoyl-ACP is likely to be the physiological substrate. The sequence is that of Octanoyl-[acyl-carrier-protein]:protein N-octanoyltransferase LIPT2, mitochondrial (lipt2) from Xenopus tropicalis (Western clawed frog).